Reading from the N-terminus, the 658-residue chain is Glycogen debranching enzyme (658 aa).

The active-site Nucleophile is the Asp336. The Proton donor role is filled by Glu371. A disordered region spans residues Glu459–Gly484.

This sequence belongs to the glycosyl hydrolase 13 family.

It carries out the reaction Hydrolysis of (1-&gt;6)-alpha-D-glucosidic linkages to branches with degrees of polymerization of three or four glucose residues in limit dextrin.. It participates in glycan degradation; glycogen degradation. Its function is as follows. Removes maltotriose and maltotetraose chains that are attached by 1,6-alpha-linkage to the limit dextrin main chain, generating a debranched limit dextrin. The polypeptide is Glycogen debranching enzyme (Salmonella choleraesuis (strain SC-B67)).